Consider the following 456-residue polypeptide: uncharacterized protein (456 aa).

One can recognise a YrdC-like domain in the interval 277 to 440 (IKNTKTIKQL…TKQLVRTTAK (164 aa)).

This is an uncharacterized protein from Mycoplasma genitalium (strain ATCC 33530 / DSM 19775 / NCTC 10195 / G37) (Mycoplasmoides genitalium).